Consider the following 390-residue polypeptide: GTPase Obg (390 aa).

An Obg domain is found at 1-159 (MKFIDESLIR…RDLLLELMLL (159 aa)). An OBG-type G domain is found at 160 to 333 (ADVGMLGLPN…LCRDIMDFII (174 aa)). GTP is bound by residues 166-173 (GLPNAGKS), 191-195 (FTTLV), 213-216 (DIPG), 283-286 (NKID), and 314-316 (SAA). Mg(2+) is bound by residues Ser173 and Thr193. The disordered stretch occupies residues 363–382 (EHQFDDDEDWDDDWSEEDDE). Residues 366–382 (FDDDEDWDDDWSEEDDE) show a composition bias toward acidic residues.

This sequence belongs to the TRAFAC class OBG-HflX-like GTPase superfamily. OBG GTPase family. Monomer. It depends on Mg(2+) as a cofactor.

The protein localises to the cytoplasm. In terms of biological role, an essential GTPase which binds GTP, GDP and possibly (p)ppGpp with moderate affinity, with high nucleotide exchange rates and a fairly low GTP hydrolysis rate. Plays a role in control of the cell cycle, stress response, ribosome biogenesis and in those bacteria that undergo differentiation, in morphogenesis control. The chain is GTPase Obg from Haemophilus influenzae (strain ATCC 51907 / DSM 11121 / KW20 / Rd).